The chain runs to 396 residues: Elongation factor Tu (396 aa).

The 196-residue stretch at 10 to 205 folds into the tr-type G domain; sequence KPHVNIGTIG…AVDESIPDPV (196 aa). The segment at 19–26 is G1; that stretch reads GHVDHGKT. 19–26 is a GTP binding site; sequence GHVDHGKT. Thr-26 contacts Mg(2+). The tract at residues 62-66 is G2; sequence GITIN. Positions 83 to 86 are G3; the sequence is DAPG. Residues 83–87 and 138–141 contribute to the GTP site; these read DAPGH and NKAD. The tract at residues 138-141 is G4; sequence NKAD. The tract at residues 175–177 is G5; the sequence is SAL.

The protein belongs to the TRAFAC class translation factor GTPase superfamily. Classic translation factor GTPase family. EF-Tu/EF-1A subfamily. In terms of assembly, monomer.

Its subcellular location is the cytoplasm. It catalyses the reaction GTP + H2O = GDP + phosphate + H(+). In terms of biological role, GTP hydrolase that promotes the GTP-dependent binding of aminoacyl-tRNA to the A-site of ribosomes during protein biosynthesis. This is Elongation factor Tu from Mycobacterium bovis (strain ATCC BAA-935 / AF2122/97).